A 158-amino-acid chain; its full sequence is Cyclic pyranopterin monophosphate synthase (158 aa).

Substrate-binding positions include 74 to 76 (MCH) and 112 to 113 (ME). D127 is a catalytic residue.

The protein belongs to the MoaC family. Homohexamer; trimer of dimers.

The enzyme catalyses (8S)-3',8-cyclo-7,8-dihydroguanosine 5'-triphosphate = cyclic pyranopterin phosphate + diphosphate. It functions in the pathway cofactor biosynthesis; molybdopterin biosynthesis. In terms of biological role, catalyzes the conversion of (8S)-3',8-cyclo-7,8-dihydroguanosine 5'-triphosphate to cyclic pyranopterin monophosphate (cPMP). This is Cyclic pyranopterin monophosphate synthase from Helicobacter pylori (strain J99 / ATCC 700824) (Campylobacter pylori J99).